Here is a 457-residue protein sequence, read N- to C-terminus: Bifunctional protein GlmU (457 aa).

Residues 1 to 230 (MPLSLPLHIV…PREVEGVNDL (230 aa)) are pyrophosphorylase. UDP-N-acetyl-alpha-D-glucosamine is bound by residues 12–15 (LAAG), Lys26, Gln78, 83–84 (GT), 105–107 (YGD), Gly140, Glu155, Asn170, and Asn228. Asp107 contributes to the Mg(2+) binding site. A Mg(2+)-binding site is contributed by Asn228. The segment at 231 to 251 (WQLTQLERTWQIRAARALCLQ) is linker. Residues 252-457 (GARVADPARL…DGWQRPKKKT (206 aa)) are N-acetyltransferase. UDP-N-acetyl-alpha-D-glucosamine contacts are provided by Arg334 and Lys352. His364 (proton acceptor) is an active-site residue. Tyr367 and Asn378 together coordinate UDP-N-acetyl-alpha-D-glucosamine. Acetyl-CoA is bound by residues Ala381, 387 to 388 (NY), Ser406, Ala424, and Arg441.

In the N-terminal section; belongs to the N-acetylglucosamine-1-phosphate uridyltransferase family. This sequence in the C-terminal section; belongs to the transferase hexapeptide repeat family. Homotrimer. The cofactor is Mg(2+).

The protein resides in the cytoplasm. It catalyses the reaction alpha-D-glucosamine 1-phosphate + acetyl-CoA = N-acetyl-alpha-D-glucosamine 1-phosphate + CoA + H(+). It carries out the reaction N-acetyl-alpha-D-glucosamine 1-phosphate + UTP + H(+) = UDP-N-acetyl-alpha-D-glucosamine + diphosphate. It functions in the pathway nucleotide-sugar biosynthesis; UDP-N-acetyl-alpha-D-glucosamine biosynthesis; N-acetyl-alpha-D-glucosamine 1-phosphate from alpha-D-glucosamine 6-phosphate (route II): step 2/2. The protein operates within nucleotide-sugar biosynthesis; UDP-N-acetyl-alpha-D-glucosamine biosynthesis; UDP-N-acetyl-alpha-D-glucosamine from N-acetyl-alpha-D-glucosamine 1-phosphate: step 1/1. It participates in bacterial outer membrane biogenesis; LPS lipid A biosynthesis. In terms of biological role, catalyzes the last two sequential reactions in the de novo biosynthetic pathway for UDP-N-acetylglucosamine (UDP-GlcNAc). The C-terminal domain catalyzes the transfer of acetyl group from acetyl coenzyme A to glucosamine-1-phosphate (GlcN-1-P) to produce N-acetylglucosamine-1-phosphate (GlcNAc-1-P), which is converted into UDP-GlcNAc by the transfer of uridine 5-monophosphate (from uridine 5-triphosphate), a reaction catalyzed by the N-terminal domain. This is Bifunctional protein GlmU from Xylella fastidiosa (strain M12).